A 212-amino-acid polypeptide reads, in one-letter code: Peptide methionine sulfoxide reductase MsrA (212 aa).

Cys52 is an active-site residue.

Belongs to the MsrA Met sulfoxide reductase family.

It catalyses the reaction L-methionyl-[protein] + [thioredoxin]-disulfide + H2O = L-methionyl-(S)-S-oxide-[protein] + [thioredoxin]-dithiol. It carries out the reaction [thioredoxin]-disulfide + L-methionine + H2O = L-methionine (S)-S-oxide + [thioredoxin]-dithiol. Has an important function as a repair enzyme for proteins that have been inactivated by oxidation. Catalyzes the reversible oxidation-reduction of methionine sulfoxide in proteins to methionine. The chain is Peptide methionine sulfoxide reductase MsrA from Yersinia enterocolitica serotype O:8 / biotype 1B (strain NCTC 13174 / 8081).